A 651-amino-acid polypeptide reads, in one-letter code: MALIRLVAPGRVFSDLASMVAYPNFQVQDKITLLGSAGGDFTFTTTASVVDNGTVFAVPGGYLLRKFVGPAYSSWFSNWTGIVTFMSAPNRHLVVDTVLQATSVLNIKSNSTLEFTDTGRILPDAAVARQVLNIIGSAPSVFVPLAADAAAGSKVITVAAGALSAVKGTYLYLRSNGLCDGGPNTYGVKISQIRKVVGVSTSGGVTSIRLDKALHYNYYLSDAAEVGIPTMVENVTLVSPYINEFGYDDLNRFFTIGISANFAADLHIQDGVIIGNKRPGASDIEGRSAIKFNNCVDSTVKGTCFYNIGWYGVEVLGCSEDTEVHDIHAMDVRHAISLNWQSTADGDKWGEPIEFLGVNCEAYNTTQAGFDTHDIGKRVKFVRCVSYDSADDGFQARTNGVEYLNCRAYRAAMDGFASNTGVAFPIYRECLAYDNVRSGFNCSYGGGYVYDCEAHGSQDGVRINGGRVKGGRYTRNSRSHIFVTKDVAETAQTSLEIDGVRMRYDGTGRAAYFHGTMGIDPTLVSMSNNDMTGHGLFWALLSGYTVQPTPPRMSRNLLDDTGIRGVATLVAGKATVNARVRGNFGSVANSFKWVSEVKLTRLTFPSSAGALTVTSVAQNQDVPTPNPDLNSFVIRSSNTADVSQVAWEVYL.

The interaction with the host trisaccharides on the capsule stretch occupies residues 71 to 559; the sequence is AYSSWFSNWT…PPRMSRNLLD (489 aa).

Belongs to the K1-specific depolymerase family. As to quaternary structure, homotrimer.

It is found in the virion. In terms of biological role, functions as a receptor binding protein (RBP) and mediates the attachment to the host capsular exopolysaccharides. Displays a lyase activity that specifically degrades the K1-type polysaccharides of Klebsiella pneumoniae capsule. This chain is Depolymerase, capsule K1-specific, found in Klebsiella pneumoniae (Bacteriophage KpV71).